The following is an 862-amino-acid chain: Valine--tRNA ligase (862 aa).

Residues Pro-47–His-57 carry the 'HIGH' region motif. The tract at residues Glu-110–Gln-130 is disordered. Residues Gly-120 to Asp-129 show a composition bias toward basic and acidic residues. The 'KMSKS' region signature appears at Lys-584–Ser-588. Lys-587 serves as a coordination point for ATP.

The protein belongs to the class-I aminoacyl-tRNA synthetase family. ValS type 2 subfamily. Monomer.

The protein resides in the cytoplasm. The enzyme catalyses tRNA(Val) + L-valine + ATP = L-valyl-tRNA(Val) + AMP + diphosphate. Functionally, catalyzes the attachment of valine to tRNA(Val). As ValRS can inadvertently accommodate and process structurally similar amino acids such as threonine, to avoid such errors, it has a 'posttransfer' editing activity that hydrolyzes mischarged Thr-tRNA(Val) in a tRNA-dependent manner. This Leifsonia xyli subsp. xyli (strain CTCB07) protein is Valine--tRNA ligase.